The following is a 213-amino-acid chain: NDR1/HIN1-like protein 26 (213 aa).

Residues Met1–Leu27 lie on the Cytoplasmic side of the membrane. The chain crosses the membrane as a helical span at residues Phe28 to Ile48. Topologically, residues Leu49–Ile213 are lumenal. 3 N-linked (GlcNAc...) asparagine glycosylation sites follow: Asn67, Asn77, and Asn195.

Expressed in the vasculature of roots, rosette leaves, stems, cauline leaves and flowers. Specifically expressed in phloem.

It is found in the cell junction. The protein localises to the plasmodesma. Its subcellular location is the endoplasmic reticulum membrane. In terms of biological role, involved in the regulation of sugar, amino acid and some primary metabolite export from companion cells (CCs) to sieve elements (SEs) in phloem. Required for apoplastic phloem sugar loading in source leaves in order to transport it to sink tissues. Required for correct sugar partitioning between source leaves and sink organs. This chain is NDR1/HIN1-like protein 26, found in Arabidopsis thaliana (Mouse-ear cress).